Here is a 402-residue protein sequence, read N- to C-terminus: MAQDRKKVLVLGAGYAGLQTVTKLQKAISTEEAEITLINKNEYHYEATWLHEASAGTLNYEDVLYPVESVLKKDKVNFVQAEVTKIDRDAKKVETNQGIYDFDILVVALGFVSETFGIEGMKDHAFQIENVITARELSRHIEDKFANYAASKEKDDNDLSILVGGAGFTGVEFLGELTDRIPELCSKYGVDQNKVKITCVEAAPKMLPMFSEELVNHAVSYLEDRGVEFKIATPIVACNEKGFVVEVDGEKQQLNAGTSVWAAGVRGSKLMEESFEGVKRGRIVTKQDLTINGYDNIFVIGDCSAFIPAGEERPLPTTAQIAMQQGESVAKNIKRILNGESTEEFEYVDRGTVCSLGSHDGVGMVFGKPIAGKKAAFMKKVIDTRAVFKIGGIGLAFKKGKF.

Residues 12–16 (GAGYA), 39–40 (NK), and V83 contribute to the FAD site. E172 is a catalytic residue. Residues D302, 319–320 (AQ), and K379 each bind FAD.

The protein belongs to the NADH dehydrogenase family. As to quaternary structure, homodimer in solution. Forms homotetramers; dimer of dimers. FAD serves as cofactor.

The protein resides in the cell membrane. The enzyme catalyses a quinone + NADH + H(+) = a quinol + NAD(+). It carries out the reaction a menaquinone + NADH + H(+) = a menaquinol + NAD(+). It catalyses the reaction a ubiquinone + NADH + H(+) = a ubiquinol + NAD(+). Its activity is regulated as follows. Inhibited by HQNO, a quinone derivative. In terms of biological role, alternative, nonproton pumping NADH:quinone oxidoreductase that delivers electrons to the respiratory chain by oxidation of NADH and reduction of quinones, and contributes to the regeneration of NAD(+). Can use DMN, a menaquinone analog, 2,3-dimethoxy-5,6-dimethyl-benzoquinone (DDB), an ubiquinone analog, or 2,3,5,6-tetramethyl-1,4-benzoquinone (Duroquinone, DQ) a plastoquinone analog as electron acceptors. The sequence is that of Type II NADH:quinone oxidoreductase from Staphylococcus aureus (strain NCTC 8325 / PS 47).